Here is a 780-residue protein sequence, read N- to C-terminus: Replication origin-binding protein (780 aa).

The region spanning 39–195 (SFENVRQPIK…AAFKPDTQIA (157 aa)) is the Helicase ATP-binding domain. 52 to 59 (AAMGSGKT) contacts ATP.

It belongs to the herpesviridae OriBP family.

Probably involved in DNA replication. Binds the origin of replication (ori). This chain is Replication origin-binding protein (U73), found in Human herpesvirus 6A (strain Uganda-1102) (HHV-6 variant A).